The chain runs to 554 residues: Dihydroxy-acid dehydratase (554 aa).

Aspartate 78 is a binding site for Mg(2+). Cysteine 119 contacts [2Fe-2S] cluster. Mg(2+)-binding residues include aspartate 120 and lysine 121. An N6-carboxylysine modification is found at lysine 121. Cysteine 192 contacts [2Fe-2S] cluster. Residue glutamate 443 participates in Mg(2+) binding. Serine 469 serves as the catalytic Proton acceptor.

The protein belongs to the IlvD/Edd family. As to quaternary structure, homodimer. [2Fe-2S] cluster serves as cofactor. Requires Mg(2+) as cofactor.

It catalyses the reaction (2R)-2,3-dihydroxy-3-methylbutanoate = 3-methyl-2-oxobutanoate + H2O. The enzyme catalyses (2R,3R)-2,3-dihydroxy-3-methylpentanoate = (S)-3-methyl-2-oxopentanoate + H2O. Its pathway is amino-acid biosynthesis; L-isoleucine biosynthesis; L-isoleucine from 2-oxobutanoate: step 3/4. It participates in amino-acid biosynthesis; L-valine biosynthesis; L-valine from pyruvate: step 3/4. Its function is as follows. Functions in the biosynthesis of branched-chain amino acids. Catalyzes the dehydration of (2R,3R)-2,3-dihydroxy-3-methylpentanoate (2,3-dihydroxy-3-methylvalerate) into 2-oxo-3-methylpentanoate (2-oxo-3-methylvalerate) and of (2R)-2,3-dihydroxy-3-methylbutanoate (2,3-dihydroxyisovalerate) into 2-oxo-3-methylbutanoate (2-oxoisovalerate), the penultimate precursor to L-isoleucine and L-valine, respectively. In Clostridium novyi (strain NT), this protein is Dihydroxy-acid dehydratase.